Consider the following 686-residue polypeptide: XK-related protein 5 (686 aa).

5 helical membrane-spanning segments follow: residues L33–S53, H205–A225, L239–P259, V265–F285, and I297–L317. 3 disordered regions span residues D340 to G362, L444 to A470, and F490 to A589. Composition is skewed to polar residues over residues L455–A470 and F490–E509. Gly residues predominate over residues Q523–G536. The segment covering V550–H567 has biased composition (polar residues).

It belongs to the XK family.

The protein localises to the cell membrane. The chain is XK-related protein 5 from Pan troglodytes (Chimpanzee).